The chain runs to 118 residues: Nucleoid-associated protein TM_0687 (118 aa).

It belongs to the YbaB/EbfC family. In terms of assembly, homodimer.

Its subcellular location is the cytoplasm. It localises to the nucleoid. Binds to DNA and alters its conformation. May be involved in regulation of gene expression, nucleoid organization and DNA protection. The polypeptide is Nucleoid-associated protein TM_0687 (Thermotoga maritima (strain ATCC 43589 / DSM 3109 / JCM 10099 / NBRC 100826 / MSB8)).